The chain runs to 493 residues: Transcript termination protein A18 (493 aa).

Residues 100–256 (MIESKRPLYI…NSIINIAKLS (157 aa)) form the Helicase ATP-binding domain. 113 to 120 (LACGFGKT) lines the ATP pocket. A DESH box motif is present at residues 206–209 (DESH).

This sequence belongs to the helicase family. Poxviruses subfamily. Interacts with G2. Might be part of a transcription complex composed at least of G2, A18, and H5.

It is found in the virion. Functionally, DNA helicase which seems to act as a postreplicative transcription termination factor. Involved in ATP-dependent release of nascent RNA. Forms a stable complex with single-stranded DNA, and to a lesser extent RNA. The polypeptide is Transcript termination protein A18 (Rabbitpox virus (strain Utrecht) (RPV)).